Reading from the N-terminus, the 317-residue chain is 1D-myo-inositol 2-acetamido-2-deoxy-alpha-D-glucopyranoside deacetylase (317 aa).

Zn(2+) is bound by residues His15, Asp18, and His154. The disordered stretch occupies residues Gln289 to Ala317.

This sequence belongs to the MshB deacetylase family. Zn(2+) is required as a cofactor.

It carries out the reaction 1D-myo-inositol 2-acetamido-2-deoxy-alpha-D-glucopyranoside + H2O = 1D-myo-inositol 2-amino-2-deoxy-alpha-D-glucopyranoside + acetate. Catalyzes the deacetylation of 1D-myo-inositol 2-acetamido-2-deoxy-alpha-D-glucopyranoside (GlcNAc-Ins) in the mycothiol biosynthesis pathway. This chain is 1D-myo-inositol 2-acetamido-2-deoxy-alpha-D-glucopyranoside deacetylase, found in Segniliparus rotundus (strain ATCC BAA-972 / CDC 1076 / CIP 108378 / DSM 44985 / JCM 13578).